The following is a 193-amino-acid chain: Frataxin, mitochondrial (193 aa).

The transit peptide at 1-72 directs the protein to the mitochondrion; it reads MIFNFLNKAS…KQQQQLSKSF (72 aa).

It belongs to the frataxin family. As to quaternary structure, monomer. Oligomer.

The protein resides in the mitochondrion. It carries out the reaction 4 Fe(2+) + O2 + 4 H(+) = 4 Fe(3+) + 2 H2O. In terms of biological role, promotes the biosynthesis of heme as well as the assembly and repair of iron-sulfur clusters by delivering Fe(2+) to proteins involved in these pathways. May play a role in the protection against iron-catalyzed oxidative stress through its ability to catalyze the oxidation of Fe(2+) to Fe(3+). May be able to store large amounts of the metal in the form of a ferrihydrite mineral by oligomerization. This Dictyostelium discoideum (Social amoeba) protein is Frataxin, mitochondrial (fxn).